A 198-amino-acid polypeptide reads, in one-letter code: Large ribosomal subunit protein bL25 (198 aa).

This sequence belongs to the bacterial ribosomal protein bL25 family. CTC subfamily. As to quaternary structure, part of the 50S ribosomal subunit; part of the 5S rRNA/L5/L18/L25 subcomplex. Contacts the 5S rRNA. Binds to the 5S rRNA independently of L5 and L18.

Functionally, this is one of the proteins that binds to the 5S RNA in the ribosome where it forms part of the central protuberance. This chain is Large ribosomal subunit protein bL25, found in Phocaeicola vulgatus (strain ATCC 8482 / DSM 1447 / JCM 5826 / CCUG 4940 / NBRC 14291 / NCTC 11154) (Bacteroides vulgatus).